Consider the following 666-residue polypeptide: Putative cysteine-rich receptor-like protein kinase 20 (666 aa).

Positions 1-23 (MSSLICFIFLFLFSFITSFTASA) are cleaved as a signal peptide. Residues 24–264 (QNPFYLYHNC…PRPGKGGNSS (241 aa)) are Extracellular-facing. 2 Gnk2-homologous domains span residues 27-131 (FYLY…NRNI) and 137-241 (TDGG…NYEF). N-linked (GlcNAc...) asparagine glycosylation is found at Asn32, Asn42, Asn60, Asn69, and Asn103. N-linked (GlcNAc...) asparagine glycosylation is present at Asn262. Residues 265 to 285 (VIVIAVVVPITVLFLLFVAFF) form a helical membrane-spanning segment. Residues 286–666 (SVRRAKRKKT…EASITSVAPR (381 aa)) lie on the Cytoplasmic side of the membrane. Positions 344–623 (FLPINKLGQG…QMLTTSSIAL (280 aa)) constitute a Protein kinase domain. ATP-binding positions include 350-358 (LGQGGFGEV) and Lys372. Tyr417 is modified (phosphotyrosine). Catalysis depends on Asp469, which acts as the Proton acceptor. At Thr509 the chain carries Phosphothreonine. At Tyr517 the chain carries Phosphotyrosine.

It belongs to the protein kinase superfamily. Ser/Thr protein kinase family. CRK subfamily.

It localises to the membrane. It carries out the reaction L-seryl-[protein] + ATP = O-phospho-L-seryl-[protein] + ADP + H(+). The catalysed reaction is L-threonyl-[protein] + ATP = O-phospho-L-threonyl-[protein] + ADP + H(+). This Arabidopsis thaliana (Mouse-ear cress) protein is Putative cysteine-rich receptor-like protein kinase 20 (CRK20).